The chain runs to 306 residues: Ornithine carbamoyltransferase (306 aa).

Residues 51–54 (STRT), glutamine 78, arginine 102, and 129–132 (HPVQ) contribute to the carbamoyl phosphate site. L-ornithine-binding positions include asparagine 159, aspartate 223, and 227–228 (SM). Carbamoyl phosphate is bound by residues 263–264 (CL) and arginine 291.

This sequence belongs to the aspartate/ornithine carbamoyltransferase superfamily. OTCase family.

The protein resides in the cytoplasm. It catalyses the reaction carbamoyl phosphate + L-ornithine = L-citrulline + phosphate + H(+). Its pathway is amino-acid biosynthesis; L-arginine biosynthesis; L-arginine from L-ornithine and carbamoyl phosphate: step 1/3. Its function is as follows. Reversibly catalyzes the transfer of the carbamoyl group from carbamoyl phosphate (CP) to the N(epsilon) atom of ornithine (ORN) to produce L-citrulline. The protein is Ornithine carbamoyltransferase of Sulfurovum sp. (strain NBC37-1).